A 665-amino-acid chain; its full sequence is MEPRVVKPPGQDLVVESLKSRYGLGGSCPDEYDFSNFYQSKYKRRTLTSPGDLDIYSGDKVGSSLKYSDESKHCRTPLGSLFKHVNVNCLDDELDSFHDLKKQETEEELIENDYRVSTSKITKQSFKEIEKVALPTNTTSSRPRTECCSDAGDSPLKPVSCPKSKASDKRSLLPHQISQIYDELFQIHLKLQCETAAQQKFAEELQKRERFLLEREQLLFRHENALSKIKGVEEEVLTRFQIIKEQHDAEVEHLTEVLKEKNKETKRLRSSFDALKELNDTLKKQLNEASEENRKIDIQAKRVQARLDNLQRKYEFMTIQRLKGSSHAVHEMKSLKQEKAPVSKTYKVPLNGQVYELLTVFMDWISDHHLSKVKHEESGMDGKKPQLKFASQRNDIQEKCVKLLPLMTEQLQWMPFVNIKLHEPFVKFIYWSLRQLDAGAQHSTMTSTLRRLGEDIFKGVVTKGIQDNSPQHSVENKPKTAAFFKSSNLPLRFLSTLIVLKTVTQADYLAQAFDSLCLDLKTEEGKTLFLEYQAVPVILSHLRISSKGLLSNVIDSLLQMTVESKSLQPFLEACSNSLFFRTCSVLLRAPKLDLQILEKLSIILQKLSKIKSNKKLFELFTIHLMLQEIQRTTNPEHAFLCINLNSTLFNLGLTKCNSLVSSASP.

Position 48 is a phosphothreonine (Thr48). Position 49 is a phosphoserine (Ser49). The stretch at 198 to 323 (QQKFAEELQK…YEFMTIQRLK (126 aa)) forms a coiled coil. Position 469 is a phosphoserine (Ser469).

The polypeptide is Coiled-coil domain-containing protein 138 (CCDC138) (Homo sapiens (Human)).